Reading from the N-terminus, the 278-residue chain is DNA oxidative demethylase ALKBH2 (278 aa).

A disordered region spans residues 1 to 49; the sequence is MDRFLVKGAVGSLKRRMEQEQTGGGPAGLAEEEGNSKKNPRRAAPGNGV. The short motif at 3–7 is the PCNA-binding element; that stretch reads RFLVK. Substrate contacts are provided by residues 101–103 and 121–123; these read FGK and YTF. The region spanning 151–256 is the Fe2OG dioxygenase domain; that stretch reads TFNFVLINRY…RVNLTFRKIL (106 aa). The 2-oxoglutarate site is built by Asn-158, Tyr-160, and His-170. Fe cation-binding residues include His-170 and Asp-172. Substrate is bound at residue Asp-173. 2-oxoglutarate is bound by residues His-235, Arg-247, Thr-251, and Arg-253. His-235 provides a ligand contact to Fe cation.

It belongs to the alkB family. As to quaternary structure, interacts with PCNA homotrimer; this interaction is enhanced during the S-phase of the cell cycle. Interacts with nucleolar proteins NCL, UBTF and NPM1. Interacts with XRCC5-XRCC6 heterodimer. It depends on Fe(2+) as a cofactor.

It localises to the nucleus. The protein localises to the nucleolus. It is found in the nucleoplasm. The enzyme catalyses a methylated nucleobase within DNA + 2-oxoglutarate + O2 = a nucleobase within DNA + formaldehyde + succinate + CO2. It carries out the reaction an N(1)-methyl-2'-deoxyadenosine in double-stranded DNA + 2-oxoglutarate + O2 = a 2'-deoxyadenosine in double-stranded DNA + formaldehyde + succinate + CO2 + H(+). It catalyses the reaction an N(1)-methyl-2'-deoxyadenosine in single-stranded DNA + 2-oxoglutarate + O2 = a 2'-deoxyadenosine in single-stranded DNA + formaldehyde + succinate + CO2 + H(+). The catalysed reaction is an N(3)-methyl-2'-deoxycytidine in double-stranded DNA + 2-oxoglutarate + O2 = a 2'-deoxycytidine in double-stranded DNA + formaldehyde + succinate + CO2 + H(+). The enzyme catalyses an N(3)-methyl-2'-deoxycytidine in single-stranded DNA + 2-oxoglutarate + O2 = a 2'-deoxycytidine in single-stranded DNA + formaldehyde + succinate + CO2 + H(+). It carries out the reaction a 1,N(6)-etheno-2'-deoxyadenosine in double-stranded DNA + 2-oxoglutarate + O2 + H2O = a 2'-deoxyadenosine in double-stranded DNA + glyoxal + succinate + CO2. It catalyses the reaction a 1,N(6)-etheno-2'-deoxyadenosine in single-stranded DNA + 2-oxoglutarate + O2 + H2O = a 2'-deoxyadenosine in single-stranded DNA + glyoxal + succinate + CO2. The catalysed reaction is a 3,N(4)-etheno-2'-deoxycytidine in double-stranded DNA + 2-oxoglutarate + O2 + H2O = a 2'-deoxycytidine in double-stranded DNA + glyoxal + succinate + CO2. The enzyme catalyses a 3,N(4)-etheno-2'-deoxycytidine in single-stranded DNA + 2-oxoglutarate + O2 + H2O = a 2'-deoxycytidine in single-stranded DNA + glyoxal + succinate + CO2. It carries out the reaction a 1,N(2)-etheno-2'-deoxyguanosine in double-stranded DNA + 2-oxoglutarate + O2 + H2O = a 2'-deoxyguanosine in double-stranded DNA + glyoxal + succinate + CO2. Its activity is regulated as follows. Activated by ascorbate and magnesium ions. Dioxygenase that repairs alkylated nucleic acid bases by direct reversal oxidative dealkylation. Can process both double-stranded (ds) and single-stranded (ss) DNA substrates, with a strong preference for dsDNA. Uses molecular oxygen, 2-oxoglutarate and iron as cofactors to oxidize the alkyl groups that are subsequently released as aldehydes, regenerating the undamaged bases. Probes the base pair stability, locates a weakened base pair and flips the damaged base to accommodate the lesion in its active site for efficient catalysis. Repairs monoalkylated bases, specifically N1-methyladenine and N3-methylcytosine, as well as higher order alkyl adducts such as bases modified with exocyclic bridged adducts known as etheno adducts including 1,N6-ethenoadenine, 3,N4-ethenocytosine and 1,N2-ethenoguanine. Acts as a gatekeeper of genomic integrity under alkylation stress. Efficiently repairs alkylated lesions in ribosomal DNA (rDNA). These lesions can cause ss- and dsDNA strand breaks that severely impair rDNA transcription. In a response mechanism to DNA damage, associates with PCNA at replication forks to repair alkylated adducts prior to replication. The chain is DNA oxidative demethylase ALKBH2 (ALKBH2) from Bos taurus (Bovine).